Consider the following 169-residue polypeptide: Small ribosomal subunit protein uS5c (169 aa).

An S5 DRBM domain is found at 17-80 (WQERVVQIRR…ADGKKHVVEV (64 aa)).

The protein belongs to the universal ribosomal protein uS5 family. Part of the 30S ribosomal subunit. Contacts protein S4.

The protein localises to the plastid. Its subcellular location is the cyanelle. Functionally, with S4 and S12 plays an important role in translational accuracy. The polypeptide is Small ribosomal subunit protein uS5c (rps5) (Cyanophora paradoxa).